Reading from the N-terminus, the 294-residue chain is Release factor glutamine methyltransferase (294 aa).

S-adenosyl-L-methionine-binding residues include glutamate 148 and asparagine 201. 201-204 (NPPY) contributes to the substrate binding site.

The protein belongs to the protein N5-glutamine methyltransferase family. PrmC subfamily.

The enzyme catalyses L-glutaminyl-[peptide chain release factor] + S-adenosyl-L-methionine = N(5)-methyl-L-glutaminyl-[peptide chain release factor] + S-adenosyl-L-homocysteine + H(+). In terms of biological role, methylates the class 1 translation termination release factors RF1/PrfA and RF2/PrfB on the glutamine residue of the universally conserved GGQ motif. This chain is Release factor glutamine methyltransferase, found in Bifidobacterium longum (strain NCC 2705).